The sequence spans 151 residues: UPF0208 membrane protein YfbV (151 aa).

Transmembrane regions (helical) follow at residues 46 to 65 (YAIR…QIAL) and 69 to 91 (LGPA…WWLG).

This sequence belongs to the UPF0208 family.

Its subcellular location is the cell inner membrane. The chain is UPF0208 membrane protein YfbV from Shigella boydii serotype 18 (strain CDC 3083-94 / BS512).